The primary structure comprises 326 residues: Vacuolar protein sorting-associated protein 26A (326 aa).

Belongs to the VPS26 family. As to quaternary structure, component of the heterotrimeric retromer cargo-selective complex (CSC) which is believed to associate with variable sorting nexins to form functionally distinct retromer complex variants.

It is found in the cytoplasm. It localises to the endosome membrane. The protein resides in the early endosome. In terms of biological role, acts as a component of the retromer cargo-selective complex (CSC). The CSC is believed to be the core functional component of retromer or respective retromer complex variants acting to prevent missorting of selected transmembrane cargo proteins into the lysosomal degradation pathway. Retromer mediates retrograde transport of cargo proteins from endosomes to the trans-Golgi network (TGN). The sequence is that of Vacuolar protein sorting-associated protein 26A (vps26a) from Xenopus tropicalis (Western clawed frog).